The following is a 163-amino-acid chain: Thiol peroxidase (163 aa).

The Thioredoxin domain occupies 16-162 (LQVGDTAHDF…YDAAIAAVKS (147 aa)). The active-site Cysteine sulfenic acid (-SOH) intermediate is the C58. The cysteines at positions 58 and 92 are disulfide-linked.

The protein belongs to the peroxiredoxin family. Tpx subfamily. Homodimer.

The enzyme catalyses a hydroperoxide + [thioredoxin]-dithiol = an alcohol + [thioredoxin]-disulfide + H2O. In terms of biological role, thiol-specific peroxidase that catalyzes the reduction of hydrogen peroxide and organic hydroperoxides to water and alcohols, respectively. Plays a role in cell protection against oxidative stress by detoxifying peroxides. This Streptococcus sanguinis protein is Thiol peroxidase.